The primary structure comprises 264 residues: Acyl-[acyl-carrier-protein]--UDP-N-acetylglucosamine O-acyltransferase (264 aa).

It belongs to the transferase hexapeptide repeat family. LpxA subfamily. Homotrimer.

It localises to the cytoplasm. The enzyme catalyses a (3R)-hydroxyacyl-[ACP] + UDP-N-acetyl-alpha-D-glucosamine = a UDP-3-O-[(3R)-3-hydroxyacyl]-N-acetyl-alpha-D-glucosamine + holo-[ACP]. It participates in glycolipid biosynthesis; lipid IV(A) biosynthesis; lipid IV(A) from (3R)-3-hydroxytetradecanoyl-[acyl-carrier-protein] and UDP-N-acetyl-alpha-D-glucosamine: step 1/6. Its function is as follows. Involved in the biosynthesis of lipid A, a phosphorylated glycolipid that anchors the lipopolysaccharide to the outer membrane of the cell. The polypeptide is Acyl-[acyl-carrier-protein]--UDP-N-acetylglucosamine O-acyltransferase (Rickettsia felis (strain ATCC VR-1525 / URRWXCal2) (Rickettsia azadi)).